A 148-amino-acid chain; its full sequence is NADH-quinone oxidoreductase subunit A (148 aa).

Transmembrane regions (helical) follow at residues tryptophan 14–glycine 34, phenylalanine 68–tryptophan 88, and valine 98–valine 118.

Belongs to the complex I subunit 3 family. In terms of assembly, NDH-1 is composed of 13 different subunits. Subunits NuoA, H, J, K, L, M, N constitute the membrane sector of the complex.

The protein resides in the cell inner membrane. The enzyme catalyses a quinone + NADH + 5 H(+)(in) = a quinol + NAD(+) + 4 H(+)(out). In terms of biological role, NDH-1 shuttles electrons from NADH, via FMN and iron-sulfur (Fe-S) centers, to quinones in the respiratory chain. The immediate electron acceptor for the enzyme in this species is believed to be ubiquinone. Couples the redox reaction to proton translocation (for every two electrons transferred, four hydrogen ions are translocated across the cytoplasmic membrane), and thus conserves the redox energy in a proton gradient. The polypeptide is NADH-quinone oxidoreductase subunit A (Klebsiella pneumoniae subsp. pneumoniae (strain ATCC 700721 / MGH 78578)).